Here is a 754-residue protein sequence, read N- to C-terminus: Phosphatase and actin regulator 4B (754 aa).

Positions 1–12 (MENRDDEVEHQH) are enriched in basic and acidic residues. Disordered stretches follow at residues 1-38 (MENR…FSTL), 83-105 (KELP…KNGH), 120-625 (VHSP…SKEQ), and 637-666 (LTRR…DRQA). The stretch at 61-86 (EVLERKMSMRRPRQELIEQGVLKELP) is one RPEL 1 repeat. Basic and acidic residues-rich tracts occupy residues 138-153 (PEDR…DHRG), 184-221 (HGED…EPDW), and 229-241 (SSVE…RESD). Low complexity-rich tracts occupy residues 296 to 307 (SFCSSNSSSSSS) and 316 to 333 (SSAG…LTTS). Pro residues-rich tracts occupy residues 348–357 (KQPPMPPPKP), 381–390 (KPSPPMPPKR), 427–445 (LPPP…PSPP), and 460–478 (YPLP…PPED). Acidic residues-rich tracts occupy residues 483 to 503 (DEDD…DEEP), 541 to 557 (SEEE…ESDS), and 566 to 576 (DESDEDEEDDS). Positions 605–615 (QAPERQAKSEH) are enriched in basic and acidic residues. 2 RPEL repeats span residues 635–660 (TALT…QPKN) and 673–698 (RRLT…RFHE). Phosphoserine is present on Ser-642.

The protein belongs to the phosphatase and actin regulator family. As to quaternary structure, binds ppp1ca and actin.

It is found in the cytoplasm. The protein resides in the cell projection. It localises to the lamellipodium. In terms of biological role, regulator of protein phosphatase 1 (PP1) required for neural tube and optic fissure closure, and enteric neural crest cell (ENCCs) migration during development. Acts as an activator of PP1. During neural tube closure, localizes to the ventral neural tube and activates PP1, leading to down-regulate cell proliferation within cranial neural tissue and the neural retina. Also acts as a regulator of migration of enteric neural crest cells (ENCCs) by activating PP1, leading to repression of the integrin signaling through the rho/rock pathway. The chain is Phosphatase and actin regulator 4B (phactr4b) from Danio rerio (Zebrafish).